Here is a 338-residue protein sequence, read N- to C-terminus: RNA 3'-terminal phosphate cyclase (338 aa).

ATP-binding positions include glutamine 103 and 283–287 (YLADQ). Catalysis depends on histidine 308, which acts as the Tele-AMP-histidine intermediate.

It belongs to the RNA 3'-terminal cyclase family. Type 1 subfamily.

It is found in the cytoplasm. The enzyme catalyses a 3'-end 3'-phospho-ribonucleotide-RNA + ATP = a 3'-end 2',3'-cyclophospho-ribonucleotide-RNA + AMP + diphosphate. Catalyzes the conversion of 3'-phosphate to a 2',3'-cyclic phosphodiester at the end of RNA. The mechanism of action of the enzyme occurs in 3 steps: (A) adenylation of the enzyme by ATP; (B) transfer of adenylate to an RNA-N3'P to produce RNA-N3'PP5'A; (C) and attack of the adjacent 2'-hydroxyl on the 3'-phosphorus in the diester linkage to produce the cyclic end product. The biological role of this enzyme is unknown but it is likely to function in some aspects of cellular RNA processing. The polypeptide is RNA 3'-terminal phosphate cyclase (Escherichia coli O7:K1 (strain IAI39 / ExPEC)).